Consider the following 176-residue polypeptide: ATP-dependent protease subunit HslV (176 aa).

Residue threonine 2 is part of the active site. Positions 157, 160, and 163 each coordinate Na(+).

The protein belongs to the peptidase T1B family. HslV subfamily. In terms of assembly, a double ring-shaped homohexamer of HslV is capped on each side by a ring-shaped HslU homohexamer. The assembly of the HslU/HslV complex is dependent on binding of ATP.

The protein resides in the cytoplasm. It carries out the reaction ATP-dependent cleavage of peptide bonds with broad specificity.. Allosterically activated by HslU binding. Its function is as follows. Protease subunit of a proteasome-like degradation complex believed to be a general protein degrading machinery. The protein is ATP-dependent protease subunit HslV of Escherichia coli O45:K1 (strain S88 / ExPEC).